The sequence spans 538 residues: Bifunctional purine biosynthesis protein PurH (538 aa).

In terms of domain architecture, MGS-like spans 8 to 158; it reads IPAPDKVEIK…KNHAYVTILT (151 aa).

This sequence belongs to the PurH family.

The enzyme catalyses (6R)-10-formyltetrahydrofolate + 5-amino-1-(5-phospho-beta-D-ribosyl)imidazole-4-carboxamide = 5-formamido-1-(5-phospho-D-ribosyl)imidazole-4-carboxamide + (6S)-5,6,7,8-tetrahydrofolate. The catalysed reaction is IMP + H2O = 5-formamido-1-(5-phospho-D-ribosyl)imidazole-4-carboxamide. The protein operates within purine metabolism; IMP biosynthesis via de novo pathway; 5-formamido-1-(5-phospho-D-ribosyl)imidazole-4-carboxamide from 5-amino-1-(5-phospho-D-ribosyl)imidazole-4-carboxamide (10-formyl THF route): step 1/1. Its pathway is purine metabolism; IMP biosynthesis via de novo pathway; IMP from 5-formamido-1-(5-phospho-D-ribosyl)imidazole-4-carboxamide: step 1/1. In Rhizobium etli (strain ATCC 51251 / DSM 11541 / JCM 21823 / NBRC 15573 / CFN 42), this protein is Bifunctional purine biosynthesis protein PurH.